The chain runs to 147 residues: MVEWTDKERTIISDIFSHMDYDDIGPKALSRCLIVYPWTQRHFSGFGNLYNAEAIIGNANVAAHGIKVLHGLDRGMKNMDNIADAYTDLSTLHSEKLHVDPDNFKLLSDCITIVLAAKMGHAFTAETQGAFQKFLAAVVSALGKQYH.

Residues 3-147 form the Globin domain; that stretch reads EWTDKERTII…VVSALGKQYH (145 aa). Heme b-binding residues include histidine 64 and histidine 93.

Belongs to the globin family. As to quaternary structure, heterotetramer of two alpha chains and two beta chains. As to expression, red blood cells.

Involved in oxygen transport from gills to the various peripheral tissues. The sequence is that of Hemoglobin subunit beta from Trematomus newnesi (Dusky notothen).